Reading from the N-terminus, the 236-residue chain is Ras-related protein RabY (236 aa).

Gly18–Thr25 serves as a coordination point for GTP. An Effector region motif is present at residues Tyr40 to Phe48. GTP contacts are provided by residues Asp66–Asp70 and Asn126–Asp129. Positions Gln192 to Gln225 are enriched in low complexity. Residues Gln192–Gln236 form a disordered region. Residue Cys233 is modified to Cysteine methyl ester. Cys233 is lipidated: S-geranylgeranyl cysteine. Residues Leu234–Gln236 constitute a propeptide, removed in mature form.

It belongs to the small GTPase superfamily. Rab family.

It is found in the cell membrane. In Dictyostelium discoideum (Social amoeba), this protein is Ras-related protein RabY (rabY).